Reading from the N-terminus, the 233-residue chain is UPF0280 protein AF_0649 (233 aa).

It belongs to the UPF0280 family.

This chain is UPF0280 protein AF_0649, found in Archaeoglobus fulgidus (strain ATCC 49558 / DSM 4304 / JCM 9628 / NBRC 100126 / VC-16).